Here is a 486-residue protein sequence, read N- to C-terminus: Glutamyl-tRNA(Gln) amidotransferase subunit A (486 aa).

Catalysis depends on charge relay system residues Lys-77 and Ser-152. The Acyl-ester intermediate role is filled by Ser-176.

This sequence belongs to the amidase family. GatA subfamily. Heterotrimer of A, B and C subunits.

The catalysed reaction is L-glutamyl-tRNA(Gln) + L-glutamine + ATP + H2O = L-glutaminyl-tRNA(Gln) + L-glutamate + ADP + phosphate + H(+). Allows the formation of correctly charged Gln-tRNA(Gln) through the transamidation of misacylated Glu-tRNA(Gln) in organisms which lack glutaminyl-tRNA synthetase. The reaction takes place in the presence of glutamine and ATP through an activated gamma-phospho-Glu-tRNA(Gln). The chain is Glutamyl-tRNA(Gln) amidotransferase subunit A from Pediococcus pentosaceus (strain ATCC 25745 / CCUG 21536 / LMG 10740 / 183-1w).